A 178-amino-acid polypeptide reads, in one-letter code: Small ribosomal subunit protein uS5 (178 aa).

One can recognise an S5 DRBM domain in the interval 15–78; the sequence is FEEKIIEIRR…ADAKKNVIEV (64 aa).

It belongs to the universal ribosomal protein uS5 family. As to quaternary structure, part of the 30S ribosomal subunit. Contacts proteins S4 and S8.

Functionally, with S4 and S12 plays an important role in translational accuracy. In terms of biological role, located at the back of the 30S subunit body where it stabilizes the conformation of the head with respect to the body. This chain is Small ribosomal subunit protein uS5, found in Thermotoga neapolitana (strain ATCC 49049 / DSM 4359 / NBRC 107923 / NS-E).